The primary structure comprises 336 residues: UPF0284 protein PYRAB00380 (336 aa).

The protein belongs to the UPF0284 family.

This Pyrococcus abyssi (strain GE5 / Orsay) protein is UPF0284 protein PYRAB00380.